A 206-amino-acid chain; its full sequence is Anti-sigma-W factor RsiW (206 aa).

The Cytoplasmic portion of the chain corresponds to 1-87 (MSCPEHIVQL…ASINRWLKAH (87 aa)). The Zn(2+) site is built by histidine 30, cysteine 34, and cysteine 37. The chain crosses the membrane as a helical span at residues 88-108 (PFLVAAALFAILMGGSFFSSW). The Extracellular segment spans residues 109–206 (KNDHDFSVSS…SVFGVKESKE (98 aa)).

It belongs to the zinc-associated anti-sigma factor (ZAS) superfamily. Anti-sigma-W factor family. The cofactor is Zn(2+). In terms of processing, is processed by three successive proteolytic events. First, the extracellular region of RsiW is cleaved by PrsW (Site-1 cleavage) in response to cell envelope stresses. Next, it undergoes cleavage at an intramembrane site (Site-2 cleavage) mediated by RasP. This cleavage uncovers a cryptic proteolytic tag with conserved alanine residues in the transmembrane segment, that is recognized mainly by the ClpXP protease, which completely degrades the protein in the cytoplasm and leads to the induction of the sigma-W-controlled genes.

The protein resides in the membrane. Its function is as follows. Is the anti-sigma factor for SigW. The presence of RsiW leads to the inactivation of SigW, and its proteolytic destruction to sigma-W activation. This Bacillus licheniformis (strain ATCC 14580 / DSM 13 / JCM 2505 / CCUG 7422 / NBRC 12200 / NCIMB 9375 / NCTC 10341 / NRRL NRS-1264 / Gibson 46) protein is Anti-sigma-W factor RsiW (rsiW).